Here is a 127-residue protein sequence, read N- to C-terminus: MKNDQKYDIKVQVRTTYLQDQSDPAQEQYVFAYTITINNIGSVASQLVSRHWIITGGDGETREVRGLGVVGEQPLLKPGESFEYTSGTAISSIAGSMKGSYQMVAEDGFHFSVEIPEFILSVPRVLH.

Residues 3–127 (NDQKYDIKVQ…FILSVPRVLH (125 aa)) form the ApaG domain.

This is Protein ApaG from Nitrosomonas eutropha (strain DSM 101675 / C91 / Nm57).